Here is a 280-residue protein sequence, read N- to C-terminus: ATP synthase gamma chain (280 aa).

Belongs to the ATPase gamma chain family. In terms of assembly, F-type ATPases have 2 components, CF(1) - the catalytic core - and CF(0) - the membrane proton channel. CF(1) has five subunits: alpha(3), beta(3), gamma(1), delta(1), epsilon(1). CF(0) has three main subunits: a, b and c.

It localises to the cell membrane. Functionally, produces ATP from ADP in the presence of a proton gradient across the membrane. The gamma chain is believed to be important in regulating ATPase activity and the flow of protons through the CF(0) complex. The sequence is that of ATP synthase gamma chain from Mycoplasma mycoides subsp. mycoides SC (strain CCUG 32753 / NCTC 10114 / PG1).